We begin with the raw amino-acid sequence, 103 residues long: Co-chaperonin GroES (103 aa).

It belongs to the GroES chaperonin family. Heptamer of 7 subunits arranged in a ring. Interacts with the chaperonin GroEL.

The protein localises to the cytoplasm. In terms of biological role, together with the chaperonin GroEL, plays an essential role in assisting protein folding. The GroEL-GroES system forms a nano-cage that allows encapsulation of the non-native substrate proteins and provides a physical environment optimized to promote and accelerate protein folding. GroES binds to the apical surface of the GroEL ring, thereby capping the opening of the GroEL channel. The sequence is that of Co-chaperonin GroES from Gloeothece citriformis (strain PCC 7424) (Cyanothece sp. (strain PCC 7424)).